The sequence spans 337 residues: DNA-directed RNA polymerase subunit alpha (337 aa).

Positions 1–231 (MRNITISAYT…KQLSVFDKIT (231 aa)) are alpha N-terminal domain (alpha-NTD). The tract at residues 248 to 337 (NTKLLQNITD…IAELKAQNEG (90 aa)) is alpha C-terminal domain (alpha-CTD).

This sequence belongs to the RNA polymerase alpha chain family. Homodimer. The RNAP catalytic core consists of 2 alpha, 1 beta, 1 beta' and 1 omega subunit. When a sigma factor is associated with the core the holoenzyme is formed, which can initiate transcription.

It carries out the reaction RNA(n) + a ribonucleoside 5'-triphosphate = RNA(n+1) + diphosphate. DNA-dependent RNA polymerase catalyzes the transcription of DNA into RNA using the four ribonucleoside triphosphates as substrates. This chain is DNA-directed RNA polymerase subunit alpha, found in Campylobacter jejuni subsp. doylei (strain ATCC BAA-1458 / RM4099 / 269.97).